Consider the following 157-residue polypeptide: Lectin (157 aa).

The cysteines at positions 37 and 54 are disulfide-linked.

As to quaternary structure, homodimer. In terms of tissue distribution, detected in fruits (at protein level).

It is found in the secreted. Functionally, binds with high affinity specifically to chito-oligosaccharides. May play a role in plant defense against pathogens by directly binding with the chitin cell wall. Forms filamentous structures at higher concentrations and may promote wound healing by forming filaments with phloem proteins like PP1. This is Lectin from Coccinia grandis (Ivy gourd).